The following is a 771-amino-acid chain: U3 small nucleolar RNA-associated protein 14 homolog A (771 aa).

Residues 23–49 form a disordered region; it reads PKDYLLSESEDEGDNDGERKHQKLLEA. A phosphoserine mark is found at S29, S31, S52, S77, and S81. A coiled-coil region spans residues 40-67; the sequence is ERKHQKLLEAISSLDGKNRRKLAERSEA. K122 participates in a covalent cross-link: Glycyl lysine isopeptide (Lys-Gly) (interchain with G-Cter in SUMO2). Residue T205 is modified to Phosphothreonine. 2 coiled-coil regions span residues 216-290 and 317-347; these read SLEE…EKAR and LEARQAMQEQLSKNKELTQKLQVASESEEEE. 2 disordered regions span residues 334 to 355 and 367 to 557; these read TQKLQVASESEEEEGGTEDVEE and MNAD…KKEQ. Acidic residues predominate over residues 342–355; that stretch reads ESEEEEGGTEDVEE. The segment covering 399–436 has biased composition (basic and acidic residues); that stretch reads LEAHGVSESEGEERPVAEEEILLREFEERRSLRKRSEL. A phosphoserine mark is found at S405 and S407. At R433 the chain carries Citrulline. S437 and S445 each carry phosphoserine. A Glycyl lysine isopeptide (Lys-Gly) (interchain with G-Cter in SUMO2) cross-link involves residue K449. S453 carries the phosphoserine modification. A compositionally biased stretch (basic and acidic residues) spans 504 to 529; the sequence is RPERVQTLEELEELGKEECFQNKELP. K519 participates in a covalent cross-link: Glycyl lysine isopeptide (Lys-Gly) (interchain with G-Cter in SUMO2). The span at 535 to 544 shows a compositional bias: polar residues; that stretch reads GQQSERTPNN. Over residues 547–557 the composition is skewed to basic and acidic residues; that stretch reads DAPKEKKKKEQ. Residue S569 is modified to Phosphoserine. R589 bears the Citrulline mark. A Glycyl lysine isopeptide (Lys-Gly) (interchain with G-Cter in SUMO2) cross-link involves residue K733. A compositionally biased stretch (polar residues) spans 740–751; that stretch reads RSSSRSDLSVIQ. Residues 740–771 are disordered; it reads RSSSRSDLSVIQRNPKRITTRHKKQLKKCSVD. Basic residues predominate over residues 753 to 771; that stretch reads NPKRITTRHKKQLKKCSVD.

This sequence belongs to the UTP14 family. As to quaternary structure, interacts with DHX37. In terms of processing, citrullinated by PADI4. As to expression, ubiquitously expressed.

The protein localises to the nucleus. Its subcellular location is the nucleolus. Functionally, may be required for ribosome biogenesis. This Homo sapiens (Human) protein is U3 small nucleolar RNA-associated protein 14 homolog A (UTP14A).